The sequence spans 268 residues: 3-methyl-2-oxobutanoate hydroxymethyltransferase (268 aa).

The Mg(2+) site is built by Asp44 and Asp83. Residues 44–45, Asp83, and Lys113 each bind 3-methyl-2-oxobutanoate; that span reads DS. Glu115 contacts Mg(2+). Residue Glu183 is the Proton acceptor of the active site.

The protein belongs to the PanB family. As to quaternary structure, homodecamer; pentamer of dimers. The cofactor is Mg(2+).

Its subcellular location is the cytoplasm. It carries out the reaction 3-methyl-2-oxobutanoate + (6R)-5,10-methylene-5,6,7,8-tetrahydrofolate + H2O = 2-dehydropantoate + (6S)-5,6,7,8-tetrahydrofolate. It functions in the pathway cofactor biosynthesis; (R)-pantothenate biosynthesis; (R)-pantoate from 3-methyl-2-oxobutanoate: step 1/2. Its function is as follows. Catalyzes the reversible reaction in which hydroxymethyl group from 5,10-methylenetetrahydrofolate is transferred onto alpha-ketoisovalerate to form ketopantoate. This Leptospira biflexa serovar Patoc (strain Patoc 1 / Ames) protein is 3-methyl-2-oxobutanoate hydroxymethyltransferase.